The primary structure comprises 524 residues: MGIVINLFLIIFASVVFFAAGFFLGRFFLERLGTTKVLEAEERAVQIVQEAQKEANEYKELKVTEVNQEWKKKRREFDQEVVIKNNKFNQLQKQVQQREAQLKKQLQDVRDTERKLQDQQKELDQAMETVGIRATELERIITEQNQRLESISNLQADEARQMLVDNMITKAREEATETIHKIHEEAEENAGRLAEKTLLTAIQRISFEQATENALSVVHIQSDELKGRIIGREGRNIKAFENATGVDIIVDDTPEVVILSCFDPLRREHAKLTLKKLLADGVIHPVAIEKAYLDAGKEMADVIMSAGEEALASLQIPDMPAEIVRLIGTMKFHSVYGQNLLQHSREVAMLAGIMATELKLDPRLAKRAGLLHDIGLVLPDTDQPHALAASEFLRKFKESAVVLNAIAAHHGEAEKESPIAELVDAANVISLARPGARGAVTADGNVKRLESLEEIAKGFPGVLKTYALQAGREIRVIVEGDNVSDSQADVLAHDIAHKIESEAQYPGQIKVSIVRERRSVAYAK.

A helical membrane pass occupies residues 3–23; it reads IVINLFLIIFASVVFFAAGFF. Residues 214 to 274 form the KH domain; the sequence is ALSVVHIQSD…LRREHAKLTL (61 aa). One can recognise an HD domain in the interval 340–432; that stretch reads LLQHSREVAM…VDAANVISLA (93 aa).

This sequence belongs to the RNase Y family.

It localises to the cell membrane. In terms of biological role, endoribonuclease that initiates mRNA decay. The chain is Ribonuclease Y from Chlorobium luteolum (strain DSM 273 / BCRC 81028 / 2530) (Pelodictyon luteolum).